Reading from the N-terminus, the 1204-residue chain is DNA-directed RNA polymerase subunit beta' (1204 aa).

Zn(2+) contacts are provided by Cys-60, Cys-62, Cys-75, and Cys-78. Mg(2+)-binding residues include Asp-449, Asp-451, and Asp-453. Residues Cys-819, Cys-893, Cys-900, and Cys-903 each contribute to the Zn(2+) site.

This sequence belongs to the RNA polymerase beta' chain family. In terms of assembly, the RNAP catalytic core consists of 2 alpha, 1 beta, 1 beta' and 1 omega subunit. When a sigma factor is associated with the core the holoenzyme is formed, which can initiate transcription. Requires Mg(2+) as cofactor. The cofactor is Zn(2+).

The enzyme catalyses RNA(n) + a ribonucleoside 5'-triphosphate = RNA(n+1) + diphosphate. Functionally, DNA-dependent RNA polymerase catalyzes the transcription of DNA into RNA using the four ribonucleoside triphosphates as substrates. The protein is DNA-directed RNA polymerase subunit beta' of Bacillus cytotoxicus (strain DSM 22905 / CIP 110041 / 391-98 / NVH 391-98).